Consider the following 63-residue polypeptide: Large ribosomal subunit protein bL28 (63 aa).

The tract at residues 1-21 (MSRRDDLTGKGPMFGNNRSHA) is disordered.

This sequence belongs to the bacterial ribosomal protein bL28 family.

The polypeptide is Large ribosomal subunit protein bL28 (Mycoplasmopsis pulmonis (strain UAB CTIP) (Mycoplasma pulmonis)).